Here is a 101-residue protein sequence, read N- to C-terminus: Small ribosomal subunit protein bS18c (101 aa).

Belongs to the bacterial ribosomal protein bS18 family. In terms of assembly, part of the 30S ribosomal subunit.

The protein localises to the plastid. The protein resides in the chloroplast. The polypeptide is Small ribosomal subunit protein bS18c (Oenothera biennis (German evening primrose)).